The chain runs to 115 residues: Probable K(+)/H(+) antiporter subunit C (115 aa).

3 consecutive transmembrane segments (helical) span residues 4-21, 28-47, and 75-97; these read ILSAGIGTLTASGVYLLL, VIIGLSLLSFAVNLFIFGMG, and ALVLTAIVIGFAMTALFLVVLLA.

It belongs to the CPA3 antiporters (TC 2.A.63) subunit C family. In terms of assembly, may form a hetero-oligomeric complex that consists of six subunits: PhaAB, PhaC, PhaD, PhaE, PhaF and PhaG.

It localises to the cell membrane. Part of a K(+) efflux system which is required for the adaptation of R.meliloti to alkaline pH as well as for the infection process during symbiotic nodule development. The sequence is that of Probable K(+)/H(+) antiporter subunit C (phaC) from Rhizobium meliloti (strain 1021) (Ensifer meliloti).